Reading from the N-terminus, the 283-residue chain is Thymidylate synthase (283 aa).

DUMP is bound at residue arginine 22. The active-site Nucleophile is cysteine 160. DUMP is bound by residues 180–183 (RSCD), asparagine 191, and 221–223 (HIY). Aspartate 183 is a binding site for (6R)-5,10-methylene-5,6,7,8-tetrahydrofolate. Serine 282 contacts (6R)-5,10-methylene-5,6,7,8-tetrahydrofolate.

This sequence belongs to the thymidylate synthase family. Bacterial-type ThyA subfamily. As to quaternary structure, homodimer.

It is found in the cytoplasm. It carries out the reaction dUMP + (6R)-5,10-methylene-5,6,7,8-tetrahydrofolate = 7,8-dihydrofolate + dTMP. It participates in pyrimidine metabolism; dTTP biosynthesis. Functionally, catalyzes the reductive methylation of 2'-deoxyuridine-5'-monophosphate (dUMP) to 2'-deoxythymidine-5'-monophosphate (dTMP) while utilizing 5,10-methylenetetrahydrofolate (mTHF) as the methyl donor and reductant in the reaction, yielding dihydrofolate (DHF) as a by-product. This enzymatic reaction provides an intracellular de novo source of dTMP, an essential precursor for DNA biosynthesis. This Vibrio cholerae serotype O1 (strain ATCC 39315 / El Tor Inaba N16961) protein is Thymidylate synthase.